A 155-amino-acid polypeptide reads, in one-letter code: Small ribosomal subunit protein uS7 (155 aa).

The protein belongs to the universal ribosomal protein uS7 family. In terms of assembly, part of the 30S ribosomal subunit. Contacts proteins S9 and S11.

Functionally, one of the primary rRNA binding proteins, it binds directly to 16S rRNA where it nucleates assembly of the head domain of the 30S subunit. Is located at the subunit interface close to the decoding center, probably blocks exit of the E-site tRNA. This chain is Small ribosomal subunit protein uS7, found in Pseudothermotoga lettingae (strain ATCC BAA-301 / DSM 14385 / NBRC 107922 / TMO) (Thermotoga lettingae).